The primary structure comprises 333 residues: Ketol-acid reductoisomerase (NADP(+)) (333 aa).

One can recognise a KARI N-terminal Rossmann domain in the interval 2 to 182; that stretch reads AELFYDDDAD…GGTRAGVIKT (181 aa). Residues 25-28, S51, S53, and 83-86 each bind NADP(+); these read YGSQ and DPIQ. The active site involves H108. Residue G134 participates in NADP(+) binding. The 146-residue stretch at 183 to 328 folds into the KARI C-terminal knotted domain; the sequence is TFTEETETDL…RELRKLMSWV (146 aa). Mg(2+) contacts are provided by D191, E195, E227, and E231. S252 lines the substrate pocket.

This sequence belongs to the ketol-acid reductoisomerase family. It depends on Mg(2+) as a cofactor.

It carries out the reaction (2R)-2,3-dihydroxy-3-methylbutanoate + NADP(+) = (2S)-2-acetolactate + NADPH + H(+). The catalysed reaction is (2R,3R)-2,3-dihydroxy-3-methylpentanoate + NADP(+) = (S)-2-ethyl-2-hydroxy-3-oxobutanoate + NADPH + H(+). It participates in amino-acid biosynthesis; L-isoleucine biosynthesis; L-isoleucine from 2-oxobutanoate: step 2/4. The protein operates within amino-acid biosynthesis; L-valine biosynthesis; L-valine from pyruvate: step 2/4. Involved in the biosynthesis of branched-chain amino acids (BCAA). Catalyzes an alkyl-migration followed by a ketol-acid reduction of (S)-2-acetolactate (S2AL) to yield (R)-2,3-dihydroxy-isovalerate. In the isomerase reaction, S2AL is rearranged via a Mg-dependent methyl migration to produce 3-hydroxy-3-methyl-2-ketobutyrate (HMKB). In the reductase reaction, this 2-ketoacid undergoes a metal-dependent reduction by NADPH to yield (R)-2,3-dihydroxy-isovalerate. This is Ketol-acid reductoisomerase (NADP(+)) from Streptomyces griseus subsp. griseus (strain JCM 4626 / CBS 651.72 / NBRC 13350 / KCC S-0626 / ISP 5235).